The primary structure comprises 275 residues: Large ribosomal subunit protein uL2 (275 aa).

Positions 224-275 are disordered; that stretch reads AMNPVDHPHGGGEGKAPIGHPGPLTPWGKPALGYKTRKKGKASDKFIIRRRK. Positions 264-275 are enriched in basic and acidic residues; that stretch reads KASDKFIIRRRK.

It belongs to the universal ribosomal protein uL2 family. Part of the 50S ribosomal subunit. Forms a bridge to the 30S subunit in the 70S ribosome.

In terms of biological role, one of the primary rRNA binding proteins. Required for association of the 30S and 50S subunits to form the 70S ribosome, for tRNA binding and peptide bond formation. It has been suggested to have peptidyltransferase activity; this is somewhat controversial. Makes several contacts with the 16S rRNA in the 70S ribosome. This is Large ribosomal subunit protein uL2 from Thermoanaerobacter pseudethanolicus (strain ATCC 33223 / 39E) (Clostridium thermohydrosulfuricum).